A 204-amino-acid polypeptide reads, in one-letter code: MTIPIVIEQSGRGERAFDIYSRLLRERIVFLGQQVDSNLANLIVAQLLFLDAEDPEKDIYLYINSPGGSVTAGMGIFDTMKHIRPDVCTICTGLAASMGAFLLSAGAKGKRMSLPHSRIMIHQPLGGAQGQATDIEIQAREILYHKRRLNDYLAEHTGQPIERIAEDTERDFFMSPDEAKDYGLIDQVIDRHAAGSRPVAMVGQ.

The Nucleophile role is filled by Ser97. Residue His122 is part of the active site.

Belongs to the peptidase S14 family. In terms of assembly, fourteen ClpP subunits assemble into 2 heptameric rings which stack back to back to give a disk-like structure with a central cavity, resembling the structure of eukaryotic proteasomes.

It is found in the cytoplasm. It carries out the reaction Hydrolysis of proteins to small peptides in the presence of ATP and magnesium. alpha-casein is the usual test substrate. In the absence of ATP, only oligopeptides shorter than five residues are hydrolyzed (such as succinyl-Leu-Tyr-|-NHMec, and Leu-Tyr-Leu-|-Tyr-Trp, in which cleavage of the -Tyr-|-Leu- and -Tyr-|-Trp bonds also occurs).. Its function is as follows. Cleaves peptides in various proteins in a process that requires ATP hydrolysis. Has a chymotrypsin-like activity. Plays a major role in the degradation of misfolded proteins. The polypeptide is ATP-dependent Clp protease proteolytic subunit 1 (Nostoc sp. (strain PCC 7120 / SAG 25.82 / UTEX 2576)).